The following is a 397-amino-acid chain: Oxysterol-binding protein homolog C354.07c (397 aa).

2 N-linked (GlcNAc...) asparagine glycosylation sites follow: N186 and N195.

The protein belongs to the OSBP family.

It localises to the endoplasmic reticulum. The chain is Oxysterol-binding protein homolog C354.07c from Schizosaccharomyces pombe (strain 972 / ATCC 24843) (Fission yeast).